Here is a 505-residue protein sequence, read N- to C-terminus: ATP synthase subunit alpha, chloroplastic (505 aa).

ATP is bound at residue 172-179; the sequence is GDRQTGKT.

This sequence belongs to the ATPase alpha/beta chains family. In terms of assembly, F-type ATPases have 2 components, CF(1) - the catalytic core - and CF(0) - the membrane proton channel. CF(1) has five subunits: alpha(3), beta(3), gamma(1), delta(1), epsilon(1). CF(0) has four main subunits: a, b, b' and c.

The protein resides in the plastid. Its subcellular location is the chloroplast thylakoid membrane. The catalysed reaction is ATP + H2O + 4 H(+)(in) = ADP + phosphate + 5 H(+)(out). Its function is as follows. Produces ATP from ADP in the presence of a proton gradient across the membrane. The alpha chain is a regulatory subunit. This is ATP synthase subunit alpha, chloroplastic from Antithamnion sp. (Red alga).